The chain runs to 609 residues: Membrane protein insertase YidC (609 aa).

Residues 9-29 form a helical membrane-spanning segment; it reads IIAIVLSGLILIAWQYFYNIP. The disordered stretch occupies residues 35–63; the sequence is RAAQQAQSQTAKSPTEPTPNSPKPDHPAA. A run of 4 helical transmembrane segments spans residues 375–395, 449–469, 507–527, and 546–566; these read VFGN…AIFF, LPMV…FVTI, LLGP…TMWF, and WMPV…VIYW.

The protein belongs to the OXA1/ALB3/YidC family. Type 1 subfamily. In terms of assembly, interacts with the Sec translocase complex via SecD. Specifically interacts with transmembrane segments of nascent integral membrane proteins during membrane integration.

It localises to the cell inner membrane. Required for the insertion and/or proper folding and/or complex formation of integral membrane proteins into the membrane. Involved in integration of membrane proteins that insert both dependently and independently of the Sec translocase complex, as well as at least some lipoproteins. Aids folding of multispanning membrane proteins. The chain is Membrane protein insertase YidC from Nitrobacter hamburgensis (strain DSM 10229 / NCIMB 13809 / X14).